We begin with the raw amino-acid sequence, 581 residues long: Transcription activator GAGA (581 aa).

The 66-residue stretch at 34-99 folds into the BTB domain; it reads VDCTLAAGGR…VYRGEVSVDH (66 aa). The segment at 201–397 is interaction with E(bx); sequence VIQAFLPARK…SSGSGSGALS (197 aa). Thr-237 is subject to Phosphothreonine. Disordered stretches follow at residues 298-343 and 364-404; these read ITPA…EQPA and LRHF…SVPQ. The C2H2-type; degenerate zinc finger occupies 343-366; the sequence is ATCPICYAVIRQSRNLRRHLELRH. The segment covering 381–401 has biased composition (low complexity); sequence GKKSSSGSSGSGSGALSSSGS.

As to quaternary structure, interacts with Bin1, lolal, corto, ttk and ph-p. Interacts with FACT subunits Ssrp and dre4/SPT16. Interacts with E(bx). Upon ecdysone stimulation, interacts with Nup98. In terms of processing, the N-terminus is blocked. In terms of tissue distribution, expressed in the central nervous system throughout development.

It is found in the nucleus. It localises to the chromosome. Transcriptional activator that functions by regulating chromatin structure. Overcomes the repressive effects of chromatin by promoting the open chromatin conformation in promoter gene regions, thereby allowing access to other transcription factors. Binds to DNA Polycomb response elements (PREs) at the bithorax complex and to the proximal region of the engrailed promoter, and positively regulates transcription of many genes including homeotic ones. Involved in zygotic genome activation (ZGA), a critical event in early embryonic development during which the developmental control passes from maternally provided mRNAs to the expression of the zygotic genome after fertilization. Binds to the DNA sequence (GA)n, with optimal binding to the pentamer 5'-GAGAG-3'. Binds DNA as an oligomer. May also act as a transcriptional repressor, maintaining the repressed state of genes including lolal, and down-regulating its own transcription. Required for dosage compensation in males and may be involved in oogenesis. Also has a role in nuclear division. This is Transcription activator GAGA (Trl) from Drosophila melanogaster (Fruit fly).